The primary structure comprises 503 residues: Beta-mannosyltransferase 4 (503 aa).

Over M1 to K24 the chain is Cytoplasmic. A helical transmembrane segment spans residues L25–H45. Topologically, residues Q46 to H503 are extracellular. The N-linked (GlcNAc...) asparagine glycan is linked to N468.

This sequence belongs to the BMT family.

The protein resides in the membrane. Functionally, beta-mannosyltransferase involved in cell wall biosynthesis. Responsible for addition of a hexose to the beta-mannose chain. This chain is Beta-mannosyltransferase 4 (BMT4), found in Komagataella phaffii (strain ATCC 76273 / CBS 7435 / CECT 11047 / NRRL Y-11430 / Wegner 21-1) (Yeast).